The chain runs to 381 residues: Mannitol-1-phosphate 5-dehydrogenase (381 aa).

Position 3–14 (3–14 (AVHFGAGNIGRG)) interacts with NAD(+).

This sequence belongs to the mannitol dehydrogenase family.

It carries out the reaction D-mannitol 1-phosphate + NAD(+) = beta-D-fructose 6-phosphate + NADH + H(+). This chain is Mannitol-1-phosphate 5-dehydrogenase, found in Exiguobacterium sibiricum (strain DSM 17290 / CCUG 55495 / CIP 109462 / JCM 13490 / 255-15).